A 327-amino-acid chain; its full sequence is MSDIMNIDSIISRLLEVRGARPGKNVQLSESEIRSLCLKSREIFLSQPILLELEAPLKICGDIHGQYYDLLRLFEYGGFPPESNYLFLGDYVDRGKQSLETICLLLAYKIKYAENFFLLRGNHECASINRIYGFYDECKRRYTIKLWKTFTDCFNCLPVAAIVDEKIFCCHGGLSPDLSSMEQIRRIMRPTDVPDQGLLCDLLWSDPDKDTMGWGENDRGVSFTFGAEVVGKFLQKHEFDLICRAHQVVEDGYEFFAKRQLVTLFSAPNYCGEFDNAGAMMSVDDTLMCSFQILKPADKRRFVYPNFGSSGRPLTPPRGANNKNKKK.

Mn(2+) is bound by residues Asp-62, His-64, Asp-90, and Asn-122. His-123 acts as the Proton donor in catalysis. Positions 171 and 246 each coordinate Mn(2+). The tract at residues 308–327 (GSSGRPLTPPRGANNKNKKK) is disordered. Thr-315 carries the phosphothreonine modification.

Belongs to the PPP phosphatase family. PP-1 subfamily. In terms of assembly, interacts with Nop17l. Requires Mn(2+) as cofactor.

It catalyses the reaction O-phospho-L-seryl-[protein] + H2O = L-seryl-[protein] + phosphate. It carries out the reaction O-phospho-L-threonyl-[protein] + H2O = L-threonyl-[protein] + phosphate. This is Serine/threonine-protein phosphatase alpha-1 isoform (Pp1alpha-96A) from Drosophila melanogaster (Fruit fly).